Reading from the N-terminus, the 508-residue chain is MAP kinase kinase MKK1/SSP32 (508 aa).

Disordered stretches follow at residues Met1–Lys21, Ile35–Asn95, and Glu130–Asn158. Polar residues predominate over residues Ile35 to Tyr47. A compositionally biased stretch (low complexity) spans Ser48–Thr66. Composition is skewed to polar residues over residues Arg67–Thr79 and Leu131–Asn158. Ser192 carries the phosphoserine modification. The Protein kinase domain maps to Ile221–Ile488. Residues Leu227–Val235 and Lys250 contribute to the ATP site. Asp349 acts as the Proton acceptor in catalysis.

This sequence belongs to the protein kinase superfamily. STE Ser/Thr protein kinase family. MAP kinase kinase subfamily.

It catalyses the reaction L-seryl-[protein] + ATP = O-phospho-L-seryl-[protein] + ADP + H(+). The enzyme catalyses L-threonyl-[protein] + ATP = O-phospho-L-threonyl-[protein] + ADP + H(+). The catalysed reaction is L-tyrosyl-[protein] + ATP = O-phospho-L-tyrosyl-[protein] + ADP + H(+). Its function is as follows. Involved in a signal transduction pathway that play a role in yeast cell morphogenesis and cell growth. This pathway seems to start by SMP3; then involve the kinase PKC1 that may act on the BCK1 kinase that then phosphorylates MKK1 and MKK2 which themselves phosphorylate the MPK1 kinase. The chain is MAP kinase kinase MKK1/SSP32 (MKK1) from Saccharomyces cerevisiae (strain ATCC 204508 / S288c) (Baker's yeast).